The following is a 189-amino-acid chain: Group XIIA secretory phospholipase A2 (189 aa).

The N-terminal stretch at 1 to 22 (MALLSRPALTLLLLLMAAVVRC) is a signal peptide. Ca(2+) contacts are provided by Gly88, Pro90, and Phe92. His110 is an active-site residue. Asp111 lines the Ca(2+) pocket. The active site involves Asp125.

Ca(2+) serves as cofactor. In terms of tissue distribution, abundantly expressed in heart, skeletal muscle, kidney, liver and pancreas.

The protein localises to the secreted. The protein resides in the cytoplasm. It carries out the reaction a 1,2-diacyl-sn-glycero-3-phosphocholine + H2O = a 1-acyl-sn-glycero-3-phosphocholine + a fatty acid + H(+). Functionally, PA2 catalyzes the calcium-dependent hydrolysis of the 2-acyl groups in 3-sn-phosphoglycerides. Does not exhibit detectable activity toward sn-2-arachidonoyl- or linoleoyl-phosphatidylcholine or -phosphatidylethanolamine. This Homo sapiens (Human) protein is Group XIIA secretory phospholipase A2 (PLA2G12A).